The following is a 389-amino-acid chain: MNNIVHKLKTLVLNEAFGGVLLIVCTLLALLVQNGSFSEHYREFLNLKVGFSVGEFELNKPFLLWINDGLISIFFFAIGLELKKEFLHGDFKNPKNIVLPFMAALGGILIPAMLFALVNIGDAYTLKGWAIPTATDTAFALAILMMCGKHIPSSLKIFLLSLAIFDDVGAILIIAIFYTTKLSIAAFVIAGLAILVMLILNLLGITRKSFYFICSVILWISVLKSGVHATLAGIVTAFFIPMQTKNGEAFLEEIYESLKFWIAFIILPLFAFANAGVNLSNIDIGAIFSGVSIGIFLGLFVGKQVGVFLFSYLAIRFKFAALPQGSNLKQLYGVCILTGIGFTMSLFIDGLAYEVSDIFNYADNLAILIASFCSGIWGFIYLKFFTTRS.

11 helical membrane passes run Val-12–Val-32, Phe-62–Leu-82, Ile-97–Leu-117, Gly-128–Gly-148, Ile-157–Phe-177, Ile-184–Gly-204, Ile-220–Ile-240, Phe-260–Ser-280, Ile-282–Gly-302, Leu-331–Leu-351, and Leu-365–Phe-385.

It belongs to the NhaA Na(+)/H(+) (TC 2.A.33) antiporter family.

It is found in the cell inner membrane. The enzyme catalyses Na(+)(in) + 2 H(+)(out) = Na(+)(out) + 2 H(+)(in). Functionally, na(+)/H(+) antiporter that extrudes sodium in exchange for external protons. This chain is Na(+)/H(+) antiporter NhaA 1, found in Campylobacter jejuni subsp. jejuni serotype O:2 (strain ATCC 700819 / NCTC 11168).